Consider the following 427-residue polypeptide: Glutamate-1-semialdehyde 2,1-aminomutase (427 aa).

Lys-268 bears the N6-(pyridoxal phosphate)lysine mark.

The protein belongs to the class-III pyridoxal-phosphate-dependent aminotransferase family. HemL subfamily. Pyridoxal 5'-phosphate serves as cofactor.

Its subcellular location is the cytoplasm. The enzyme catalyses (S)-4-amino-5-oxopentanoate = 5-aminolevulinate. Its pathway is porphyrin-containing compound metabolism; protoporphyrin-IX biosynthesis; 5-aminolevulinate from L-glutamyl-tRNA(Glu): step 2/2. In Methanococcus maripaludis (strain C5 / ATCC BAA-1333), this protein is Glutamate-1-semialdehyde 2,1-aminomutase.